A 192-amino-acid chain; its full sequence is Adenylate kinase (192 aa).

10–18 is a binding site for ATP; sequence GVPGVGKTT.

Belongs to the archaeal adenylate kinase family.

Its subcellular location is the cytoplasm. It catalyses the reaction AMP + ATP = 2 ADP. The polypeptide is Adenylate kinase (Methanoculleus marisnigri (strain ATCC 35101 / DSM 1498 / JR1)).